Here is a 276-residue protein sequence, read N- to C-terminus: Rhamnulose-1-phosphate aldolase (276 aa).

Residue E117 is part of the active site. Zn(2+) is bound by residues H141, H143, and H212.

It belongs to the aldolase class II family. RhaD subfamily. In terms of assembly, homotetramer. Zn(2+) is required as a cofactor.

The protein resides in the cytoplasm. The catalysed reaction is L-rhamnulose 1-phosphate = (S)-lactaldehyde + dihydroxyacetone phosphate. It participates in carbohydrate degradation; L-rhamnose degradation; glycerone phosphate from L-rhamnose: step 3/3. In terms of biological role, catalyzes the reversible cleavage of L-rhamnulose-1-phosphate to dihydroxyacetone phosphate (DHAP) and L-lactaldehyde. The sequence is that of Rhamnulose-1-phosphate aldolase from Klebsiella pneumoniae (strain 342).